We begin with the raw amino-acid sequence, 385 residues long: Galactokinase (385 aa).

34–37 is a binding site for substrate; sequence EHTD. 124 to 130 serves as a coordination point for ATP; the sequence is SSGLSSS. Positions 130 and 162 each coordinate Mg(2+). Aspartate 174 (proton acceptor) is an active-site residue. A substrate-binding site is contributed by tyrosine 223.

This sequence belongs to the GHMP kinase family. GalK subfamily.

The protein localises to the cytoplasm. It catalyses the reaction alpha-D-galactose + ATP = alpha-D-galactose 1-phosphate + ADP + H(+). Its pathway is carbohydrate metabolism; galactose metabolism. In terms of biological role, catalyzes the transfer of the gamma-phosphate of ATP to D-galactose to form alpha-D-galactose-1-phosphate (Gal-1-P). This chain is Galactokinase, found in Actinobacillus succinogenes (strain ATCC 55618 / DSM 22257 / CCUG 43843 / 130Z).